The sequence spans 140 residues: Mialostatin (140 aa).

The N-terminal stretch at 1–18 is a signal peptide; sequence MAFFKSAVFLVCVVLAAA. Intrachain disulfides connect Cys90–Cys103 and Cys114–Cys134.

This sequence belongs to the cystatin family. As to expression, expressed in midgut (at protein level).

The protein resides in the secreted. Inhibitor of cysteine proteinases. Inhibits several endogenous midgut digestive cysteine proteases, such as cathepsin L1, L3, B and C, but not aspartic protease cathepsin D1 and cysteine protease legumain. Inhibits proteolysis of blood proteins catalyzed by tick gut cysteine cathepsins. Inhibits host cathepsin B (CSTB), C (CTSC), H (CTSH), K (CTSK), L (CTSL) and S (CTSS). This chain is Mialostatin, found in Ixodes ricinus (Common tick).